Reading from the N-terminus, the 496-residue chain is Glycerol kinase (496 aa).

An ADP-binding site is contributed by Thr-14. Positions 14 and 15 each coordinate ATP. Residue Thr-14 participates in sn-glycerol 3-phosphate binding. Sn-glycerol 3-phosphate is bound by residues Arg-84, Glu-85, Tyr-136, and Asp-246. Residues Arg-84, Glu-85, Tyr-136, Asp-246, and Gln-247 each contribute to the glycerol site. The ADP site is built by Thr-268 and Gly-313. ATP-binding residues include Thr-268, Gly-313, Gln-317, and Gly-414. Gly-414 and Asn-418 together coordinate ADP.

It belongs to the FGGY kinase family.

The enzyme catalyses glycerol + ATP = sn-glycerol 3-phosphate + ADP + H(+). The protein operates within polyol metabolism; glycerol degradation via glycerol kinase pathway; sn-glycerol 3-phosphate from glycerol: step 1/1. Inhibited by fructose 1,6-bisphosphate (FBP). Key enzyme in the regulation of glycerol uptake and metabolism. Catalyzes the phosphorylation of glycerol to yield sn-glycerol 3-phosphate. The chain is Glycerol kinase from Myxococcus xanthus (strain DK1622).